Here is a 367-residue protein sequence, read N- to C-terminus: MKEPLDLSKYSIRTDLAVEAHQMLQESQEEQKGIQGVIVKEREEEGTIITKVTIDEAASEAMGKKPGNYLTLEVQGIRQQDTELQQKVERIFAKEFSCFLEEVGVTKEASCLIVGLGNWNVTPDALGPIVVENVLVTRHLFQLQPESVEEGFRPVSAIRPGVMGITGIETSDVIYGIIEKTNPDFVIAIDALAARSIERVNSTIQISDTGIHPGSGVGNKRKELSKDTLGIPVIAIGVPTVVDAVSITSDTIDFILKHFGREMKEGNKPSRSLLPAGFSFGEKKQLTQEDMPDEKSRNMFLGVVGTLEEEEKRRLIYEVLSLLGHNLMVPPKEVDSFIEDMANVIASGLNAALHHQIDQDNTGAYTH.

Positions 1-15 are excised as a propeptide; that stretch reads MKEPLDLSKYSIRTD.

It belongs to the peptidase A25 family. In terms of assembly, homotetramer. Autoproteolytically processed. The inactive tetrameric zymogen termed p46 autoprocesses to a smaller form termed p41, which is active only during spore germination.

The catalysed reaction is Endopeptidase action with P4 Glu or Asp, P1 preferably Glu &gt; Asp, P1' hydrophobic and P2' Ala.. In terms of biological role, initiates the rapid degradation of small, acid-soluble proteins during spore germination. In Bacillus cereus (strain ATCC 14579 / DSM 31 / CCUG 7414 / JCM 2152 / NBRC 15305 / NCIMB 9373 / NCTC 2599 / NRRL B-3711), this protein is Germination protease.